The following is a 310-amino-acid chain: Acetylglutamate kinase (310 aa).

Substrate contacts are provided by residues 79-80 (GG), Arg-101, and Asn-206.

Belongs to the acetylglutamate kinase family. ArgB subfamily.

Its subcellular location is the cytoplasm. The enzyme catalyses N-acetyl-L-glutamate + ATP = N-acetyl-L-glutamyl 5-phosphate + ADP. The protein operates within amino-acid biosynthesis; L-arginine biosynthesis; N(2)-acetyl-L-ornithine from L-glutamate: step 2/4. Functionally, catalyzes the ATP-dependent phosphorylation of N-acetyl-L-glutamate. This Rhodospirillum rubrum (strain ATCC 11170 / ATH 1.1.1 / DSM 467 / LMG 4362 / NCIMB 8255 / S1) protein is Acetylglutamate kinase.